Reading from the N-terminus, the 63-residue chain is Large ribosomal subunit protein bL35 (63 aa).

It belongs to the bacterial ribosomal protein bL35 family.

The protein is Large ribosomal subunit protein bL35 of Sulfurovum sp. (strain NBC37-1).